A 1010-amino-acid polypeptide reads, in one-letter code: BrkA autotransporter (1010 aa).

The first 42 residues, 1–42, serve as a signal peptide directing secretion; that stretch reads MYLDRFRQCPSSLQIPRSAWRLHALAAALALAGMARLAPAAA. The region spanning 742–1010 is the Autotransporter domain; it reads LRADAGGPWA…SFHAGYRYSF (269 aa).

It localises to the periplasm. Its subcellular location is the secreted. It is found in the cell surface. The protein localises to the cell outer membrane. Functionally, inhibits the classical pathway of complement activation and prevents accumulation of deposited C4. This Bordetella pertussis (strain Tohama I / ATCC BAA-589 / NCTC 13251) protein is BrkA autotransporter.